Reading from the N-terminus, the 334-residue chain is Heat-inducible transcription repressor HrcA (334 aa).

Belongs to the HrcA family.

Its function is as follows. Negative regulator of class I heat shock genes (grpE-dnaK-dnaJ and groELS operons). Prevents heat-shock induction of these operons. In Albidiferax ferrireducens (strain ATCC BAA-621 / DSM 15236 / T118) (Rhodoferax ferrireducens), this protein is Heat-inducible transcription repressor HrcA.